The primary structure comprises 340 residues: DnaJ homolog subfamily B member 1 (340 aa).

The 69-residue stretch at 2–70 (GKDYYQTLGL…REIFDRYGEE (69 aa)) folds into the J domain. The interval 68-90 (GEEGLKGSGPSGGSSGGTNGTSF) is disordered. Positions 73-86 (KGSGPSGGSSGGTN) are enriched in gly residues. At threonine 307 the chain carries Phosphothreonine.

Interacts with DNAJC3. Interacts with HSF1 (via transactivation domain); this interaction results in the inhibition of heat shock- and HSF1-induced transcriptional activity during the attenuation and recovery phase period of the heat shock response. Interacts with BAG3.

It is found in the cytoplasm. It localises to the nucleus. Its subcellular location is the nucleolus. Its function is as follows. Interacts with HSP70 and can stimulate its ATPase activity. Stimulates the association between HSC70 and HIP. Negatively regulates heat shock-induced HSF1 transcriptional activity during the attenuation and recovery phase period of the heat shock response. Stimulates ATP hydrolysis and the folding of unfolded proteins mediated by HSPA1A/B (in vitro). The sequence is that of DnaJ homolog subfamily B member 1 (DNAJB1) from Bos taurus (Bovine).